Consider the following 61-residue polypeptide: Small ribosomal subunit protein uS14 (61 aa).

Zn(2+)-binding residues include Cys24, Cys27, Cys40, and Cys43.

The protein belongs to the universal ribosomal protein uS14 family. Zinc-binding uS14 subfamily. As to quaternary structure, part of the 30S ribosomal subunit. Contacts proteins S3 and S10. Zn(2+) is required as a cofactor.

Its function is as follows. Binds 16S rRNA, required for the assembly of 30S particles and may also be responsible for determining the conformation of the 16S rRNA at the A site. In Syntrophobacter fumaroxidans (strain DSM 10017 / MPOB), this protein is Small ribosomal subunit protein uS14.